Consider the following 506-residue polypeptide: Zinc finger protein MAGPIE (506 aa).

Positions 1-53 (MTTEDQTISSSGGYVQSSSTTDHVDHHHHDQHESLNPPLVKKKRNLPGNPDPE) are disordered. Residues 9–21 (SSSGGYVQSSSTT) show a composition bias toward low complexity. A compositionally biased stretch (basic and acidic residues) spans 22 to 33 (DHVDHHHHDQHE). S60 carries the phosphoserine modification. 2 C2H2-type zinc fingers span residues 70–92 (FLCEICGKGFQRDQNLQLHRRGH) and 111–141 (YVCPEKSCVHHHPTRALGDLTGIKKHFCRKH). The short motif at 133–140 (IKKHFCRK) is the Nuclear localization signal element. The segment at 146–169 (WKCEKCAKRYAVQSDWKAHSKTCG) adopts a C2H2-type 2; degenerate zinc-finger fold. Positions 148, 151, 164, 168, 175, 177, 190, and 194 each coordinate Zn(2+). The CCHC-type 2; atypical zinc finger occupies 173 to 196 (YRCDCGTIFSRRDSFITHRAFCDA). The interval 183–195 (RRDSFITHRAFCD) is SHR-binding.

As to quaternary structure, interacts with SHR, SCR and JKD, but not with itself. Interacts with SIEL. Binds to RGA and SCL3 competitively in the nucleus. Expressed in the ground tissue and stele cells of embryos and 2-days post-germination roots but not in the quiescent center. Detected only in cells that perform asymmetric cell divisions. In roots, present in cortex, endodermis, and pericycle layer.

Its subcellular location is the nucleus. In terms of biological role, transcription factor that regulates tissue boundaries and asymmetric cell division. Contributes to the sequestration of 'SHORT-ROOT' to the nucleus. Interacts with the SCR and MGP promoters. Does not show transcription activity by itself, but regulates the transcription of downstream genes through interaction with other transcription factors. Binds DNA via its zinc fingers. Recognizes and binds to SCL3 promoter sequence 5'-AGACAA-3' to promote its expression when in complex with RGA. Positively involved in gibberellic acid (GA) signaling. The chain is Zinc finger protein MAGPIE from Arabidopsis thaliana (Mouse-ear cress).